Reading from the N-terminus, the 490-residue chain is GTPase Der (490 aa).

2 consecutive EngA-type G domains span residues 3–166 (PVVA…MDDV) and 203–376 (IKLA…DSST). GTP contacts are provided by residues 9–16 (GRPNVGKS), 56–60 (DTGGI), 118–121 (NKTD), 209–216 (GRPNVGKS), 256–260 (DTAGV), and 321–324 (NKWD). The 85-residue stretch at 377-461 (RRVSTAMLTR…PIRIQFKEGE (85 aa)) folds into the KH-like domain.

It belongs to the TRAFAC class TrmE-Era-EngA-EngB-Septin-like GTPase superfamily. EngA (Der) GTPase family. In terms of assembly, associates with the 50S ribosomal subunit.

GTPase that plays an essential role in the late steps of ribosome biogenesis. The chain is GTPase Der from Salmonella newport (strain SL254).